A 188-amino-acid polypeptide reads, in one-letter code: Probable manganese efflux pump MntP (188 aa).

6 helical membrane-spanning segments follow: residues 3 to 23 (FTAT…ASIG), 41 to 61 (LIFG…GILA), 66 to 86 (LEWN…RMII), 106 to 128 (WLLV…GLAF), 143 to 163 (ATLI…PMLG), and 168 to 188 (ILGG…HFHG).

This sequence belongs to the MntP (TC 9.B.29) family.

The protein resides in the cell inner membrane. Its function is as follows. Probably functions as a manganese efflux pump. This is Probable manganese efflux pump MntP from Salmonella typhimurium (strain LT2 / SGSC1412 / ATCC 700720).